The chain runs to 79 residues: Conotoxin Cal9.2a (79 aa).

The signal sequence occupies residues 1-23 (MNCYLILTVALLLTSAMTGTTTA). Residues 24 to 33 (GQLNKKGVTL) constitute a propeptide that is removed on maturation. 3 disulfide bridges follow: cysteine 41–cysteine 58, cysteine 46–cysteine 68, and cysteine 48–cysteine 73.

Expressed by the venom duct.

It is found in the secreted. Its function is as follows. Probable neurotoxin with unknown target. Possibly targets ion channels. The chain is Conotoxin Cal9.2a from Californiconus californicus (California cone).